Consider the following 103-residue polypeptide: Urease subunit beta (103 aa).

This sequence belongs to the urease beta subunit family. In terms of assembly, heterotrimer of UreA (gamma), UreB (beta) and UreC (alpha) subunits. Three heterotrimers associate to form the active enzyme.

It localises to the cytoplasm. It catalyses the reaction urea + 2 H2O + H(+) = hydrogencarbonate + 2 NH4(+). It participates in nitrogen metabolism; urea degradation; CO(2) and NH(3) from urea (urease route): step 1/1. The chain is Urease subunit beta from Streptomyces coelicolor (strain ATCC BAA-471 / A3(2) / M145).